The following is a 550-amino-acid chain: Keratin, type II cytoskeletal 74 (550 aa).

Positions 1-140 (MSRQLNIKSG…DPEIQKVRAQ (140 aa)) are head. The coil 1A stretch occupies residues 141-176 (EREQIMALNNKFASFIDKVRFLEQQNQVLGTKWELL). The IF rod domain maps to 141–468 (EREQIMALNN…KLLEGEECWM (328 aa)). A linker 1 region spans residues 177 to 195 (QQMDLNNCRKNLEPILEGY). A coil 1B region spans residues 196–287 (IGNLRKQLEM…CLYDAEVAQI (92 aa)). The linker 12 stretch occupies residues 288 to 311 (QTHTSETSVILSMDNNRYLDLDSI). Residues 312-464 (IAEVRAQYED…ATYSKLLEGE (153 aa)) form a coil 2 region. A tail region spans residues 465–550 (ECWMSGENPS…VSSRARKAAR (86 aa)). The tract at residues 491-550 (HPGSSASTDLGASTMASTGTSSSSSTQSGQTRAKGARVGDPKDSQDKSTPVSSRARKAAR) is disordered. A compositionally biased stretch (low complexity) spans 502-521 (ASTMASTGTSSSSSTQSGQT). Over residues 527–536 (RVGDPKDSQD) the composition is skewed to basic and acidic residues.

It belongs to the intermediate filament family. Heterotetramer of two type I and two type II keratins.

Its function is as follows. Has a role in hair formation. Specific component of keratin intermediate filaments in the inner root sheath (IRS) of the hair follicle. This Bos taurus (Bovine) protein is Keratin, type II cytoskeletal 74 (KRT74).